Here is a 283-residue protein sequence, read N- to C-terminus: 3-methyl-2-oxobutanoate hydroxymethyltransferase (283 aa).

Residues D46 and D85 each contribute to the Mg(2+) site. Residues 46 to 47, D85, and K115 each bind 3-methyl-2-oxobutanoate; that span reads DS. E117 contributes to the Mg(2+) binding site. Catalysis depends on E184, which acts as the Proton acceptor.

Belongs to the PanB family. As to quaternary structure, homodecamer; pentamer of dimers. Mg(2+) serves as cofactor.

It is found in the cytoplasm. The enzyme catalyses 3-methyl-2-oxobutanoate + (6R)-5,10-methylene-5,6,7,8-tetrahydrofolate + H2O = 2-dehydropantoate + (6S)-5,6,7,8-tetrahydrofolate. It participates in cofactor biosynthesis; (R)-pantothenate biosynthesis; (R)-pantoate from 3-methyl-2-oxobutanoate: step 1/2. In terms of biological role, catalyzes the reversible reaction in which hydroxymethyl group from 5,10-methylenetetrahydrofolate is transferred onto alpha-ketoisovalerate to form ketopantoate. This Acetivibrio thermocellus (strain ATCC 27405 / DSM 1237 / JCM 9322 / NBRC 103400 / NCIMB 10682 / NRRL B-4536 / VPI 7372) (Clostridium thermocellum) protein is 3-methyl-2-oxobutanoate hydroxymethyltransferase.